A 136-amino-acid polypeptide reads, in one-letter code: uncharacterized protein (136 aa).

Residues methionine 1–alanine 19 form the signal peptide. Residues phenylalanine 75–phenylalanine 97 traverse the membrane as a helical segment.

It is found in the membrane. This is an uncharacterized protein from Saccharomyces cerevisiae (strain ATCC 204508 / S288c) (Baker's yeast).